The sequence spans 188 residues: Elongation factor P-like protein (188 aa).

It belongs to the elongation factor P family.

This is Elongation factor P-like protein from Xanthomonas euvesicatoria pv. vesicatoria (strain 85-10) (Xanthomonas campestris pv. vesicatoria).